We begin with the raw amino-acid sequence, 2924 residues long: Zinc finger ZZ-type and EF-hand domain-containing protein 1 (2924 aa).

The segment at Met-1–Ala-41 is disordered. The N-myristoyl glycine moiety is linked to residue Gly-2. The segment covering Ala-28–Ala-41 has biased composition (low complexity). Residues Cys-111 to Ala-146 enclose the EF-hand domain. One can recognise a DOC domain in the interval Leu-226–Ser-405. Ser-240 carries the post-translational modification Phosphoserine. Over residues His-1452–Phe-1470 the composition is skewed to basic and acidic residues. The tract at residues His-1452 to Thr-1527 is disordered. Over residues Gly-1472 to Gly-1485 the composition is skewed to low complexity. Ser-1475, Ser-1488, and Ser-1509 each carry phosphoserine. A Phosphothreonine modification is found at Thr-1510. Residues Pro-1514–Arg-1523 show a composition bias toward pro residues. The residue at position 1515 (Ser-1515) is a Phosphoserine. Phosphothreonine occurs at positions 1519 and 1521. Residues Ser-1535 and Ser-1538 each carry the phosphoserine modification. 2 consecutive ZZ-type zinc fingers follow at residues Asn-1776–Asp-1831 and Asn-1825–Ile-1880. 16 residues coordinate Zn(2+): Cys-1781, Cys-1784, Cys-1795, Cys-1798, Cys-1804, Cys-1807, His-1817, His-1821, Cys-1830, Cys-1833, Cys-1844, Cys-1847, Cys-1853, Cys-1856, His-1866, and His-1870. The segment at Asp-2388–Pro-2418 is disordered. At Ser-2407 the chain carries Phosphoserine. Lys-2630 carries the post-translational modification N6-acetyllysine.

As to quaternary structure, interacts with KLF6 and KLF9. Interacts via (ZZ-type 2 zinc finger) with histone H3 trimethylated at 'Lys-4' (H3K4me3) and histone H3 acetylated at 'Lys-4' (H3K4ac).

In terms of biological role, histone H3 reader which may act as a transcriptional coactivator for KLF6 and KLF9 transcription factors. In Mus musculus (Mouse), this protein is Zinc finger ZZ-type and EF-hand domain-containing protein 1 (Zzef1).